The primary structure comprises 77 residues: Large ribosomal subunit protein eL14 (77 aa).

The protein belongs to the eukaryotic ribosomal protein eL14 family.

This Methanococcus maripaludis (strain C7 / ATCC BAA-1331) protein is Large ribosomal subunit protein eL14.